The following is a 201-amino-acid chain: ADP-ribosylation factor-related protein 1 (201 aa).

An N-acetylmethionine modification is found at Met-1. GTP-binding positions include 24–31, 75–79, and 134–137; these read GLDNAGKT, DLGGQ, and NKQD.

Belongs to the small GTPase superfamily. Arf family. Interacts with SYS1.

Its subcellular location is the golgi apparatus. The protein resides in the trans-Golgi network. Trans-Golgi-associated GTPase that regulates protein sorting. Controls the targeting of ARL1 and its effector to the trans-Golgi. Required for the lipidation of chylomicrons in the intestine and required for VLDL lipidation in the liver. This Pongo abelii (Sumatran orangutan) protein is ADP-ribosylation factor-related protein 1 (ARFRP1).